We begin with the raw amino-acid sequence, 338 residues long: Malate dehydrogenase, mitochondrial (338 aa).

The transit peptide at 1–24 (MLSALARPAGAALRRSFSTSXQNN) directs the protein to the mitochondrion. NAD(+)-binding positions include 31–37 (GASGGIG) and D57. Residue S33 is glycosylated (O-linked (GlcNAc) serine). Residues K78 and K91 each carry the N6-acetyllysine; alternate modification. N6-succinyllysine; alternate is present on residues K78 and K91. 2 residues coordinate substrate: R104 and R110. Residues N117 and 140–142 (ISN) contribute to the NAD(+) site. N142 contributes to the substrate binding site. K165 bears the N6-acetyllysine mark. R176 contributes to the substrate binding site. The residue at position 185 (K185) is an N6-acetyllysine; alternate. Position 185 is an N6-succinyllysine; alternate (K185). Catalysis depends on H200, which acts as the Proton acceptor. K203 carries the N6-succinyllysine modification. An N6-acetyllysine; alternate mark is found at K215 and K239. N6-succinyllysine; alternate occurs at positions 215 and 239. Residue K239 is modified to N6-malonyllysine; alternate. Position 246 is a phosphoserine (S246). An NAD(+)-binding site is contributed by M251. Position 269 is an N6-succinyllysine (K269). An N6-acetyllysine; alternate mark is found at K296, K301, K307, K314, and K324. 5 positions are modified to N6-succinyllysine; alternate: K296, K301, K307, K314, and K324. K307 is modified (N6-malonyllysine; alternate). A Phosphoserine modification is found at S326. K328, K329, and K335 each carry N6-acetyllysine; alternate. K328 carries the post-translational modification N6-succinyllysine; alternate. An N6-malonyllysine; alternate modification is found at K329. Position 335 is an N6-succinyllysine; alternate (K335).

It belongs to the LDH/MDH superfamily. MDH type 1 family. Homodimer. In terms of processing, acetylation is enhanced after treatment either with trichostin A (TCA) or with nicotinamide (NAM) with the appearance of tri- and tetraacetylations. Glucose also increases acetylation.

The protein localises to the mitochondrion matrix. It catalyses the reaction (S)-malate + NAD(+) = oxaloacetate + NADH + H(+). Enzyme activity is enhanced by acetylation. The polypeptide is Malate dehydrogenase, mitochondrial (MDH2) (Sus scrofa (Pig)).